The sequence spans 513 residues: V-type proton ATPase subunit B (513 aa).

Arginine 375 lines the ATP pocket. The span at alanine 484–alanine 503 shows a compositional bias: basic and acidic residues. The tract at residues alanine 484–alanine 513 is disordered. Residues alanine 504 to alanine 513 show a composition bias toward acidic residues.

It belongs to the ATPase alpha/beta chains family. In terms of assembly, V-ATPase is a heteromultimeric enzyme composed of a peripheral catalytic V1 complex (components A to H) attached to an integral membrane V0 proton pore complex (components: a, c, c', c'', d, e, f and VOA1).

It is found in the vacuole membrane. Functionally, non-catalytic subunit of the V1 complex of vacuolar(H+)-ATPase (V-ATPase), a multisubunit enzyme composed of a peripheral complex (V1) that hydrolyzes ATP and a membrane integral complex (V0) that translocates protons. V-ATPase is responsible for acidifying and maintaining the pH of intracellular compartments. The polypeptide is V-type proton ATPase subunit B (Neurospora crassa (strain ATCC 24698 / 74-OR23-1A / CBS 708.71 / DSM 1257 / FGSC 987)).